The chain runs to 165 residues: Thiol peroxidase (165 aa).

The region spanning 18-164 (RKVGDKAPNF…YEAAIEAAKK (147 aa)) is the Thioredoxin domain. Cys-60 acts as the Cysteine sulfenic acid (-SOH) intermediate in catalysis. An intrachain disulfide couples Cys-60 to Cys-94.

It belongs to the peroxiredoxin family. Tpx subfamily. As to quaternary structure, homodimer.

It carries out the reaction a hydroperoxide + [thioredoxin]-dithiol = an alcohol + [thioredoxin]-disulfide + H2O. In terms of biological role, thiol-specific peroxidase that catalyzes the reduction of hydrogen peroxide and organic hydroperoxides to water and alcohols, respectively. Plays a role in cell protection against oxidative stress by detoxifying peroxides. This chain is Thiol peroxidase, found in Listeria monocytogenes serotype 4b (strain F2365).